A 470-amino-acid polypeptide reads, in one-letter code: 5-hydroxytryptamine receptor 2A (470 aa).

A disordered region spans residues 1 to 23 (MDVLFEDNAPLSPTTSSLMPSNG). Residues 1–80 (MDVLFEDNAP…LQEKNWSALL (80 aa)) lie on the Extracellular side of the membrane. A compositionally biased stretch (low complexity) spans 10–21 (PLSPTTSSLMPS). N-linked (GlcNAc...) asparagine glycans are attached at residues Asn38, Asn44, Asn51, and Asn54. The helical transmembrane segment at 81-97 (TAVVIILTIAGNILVIM) threads the bilayer. Topologically, residues 98–111 (AVSLEKKLQNATNY) are cytoplasmic. The chain crosses the membrane as a helical span at residues 112 to 137 (FLMSLAIADMLLGFLVMPVSMLTILY). The Extracellular portion of the chain corresponds to 138–146 (GYRWPLPSK). Residues 147–171 (LCAVWIYLDVLFSTASIMHLCAISL) form a helical membrane-spanning segment. The cysteines at positions 148 and 227 are disulfide-linked. Residue Asp155 participates in serotonin binding. Residues 172–174 (DRY) carry the DRY motif; important for ligand-induced conformation changes motif. Residues 172-191 (DRYVAIQNPIHHSRFNSRTK) are Cytoplasmic-facing. A helical membrane pass occupies residues 192-215 (AFLKIIAVWTISVGISMPIPVFGL). Topologically, residues 216-232 (QDDSKVFKEGSCLLADD) are extracellular. A helical membrane pass occupies residues 233–258 (NFVLIGSFVSFFIPLTIMVITYFLTI). The Cytoplasmic segment spans residues 259 to 321 (KSLQKEATLC…QSISNEQKAC (63 aa)). Residue Ser280 is modified to Phosphoserine. Residues 322–347 (KVLGIVFFLFVVMWCPFFITNIMAVI) form a helical membrane-spanning segment. Serotonin is bound at residue Asn342. Cys348 and Cys352 are oxidised to a cystine. Topologically, residues 348–355 (CKESCNED) are extracellular. A helical membrane pass occupies residues 356–381 (IIGALLNVFVWIGYLSSAVNPLVYTL). The NPxxY motif; important for ligand-induced conformation changes and signaling motif lies at 375–379 (NPLVY). Residues 382–470 (FNKTYRSAFS…NTVNEKVSCV (89 aa)) lie on the Cytoplasmic side of the membrane. The PDZ-binding motif lies at 468–470 (SCV).

It belongs to the G-protein coupled receptor 1 family. Interacts (via C-terminus) with MPDZ and PATJ. May interact (via C-terminus) with MPP3, PRDX6, DLG4, DLG1, CASK, APBA1 and MAGI2. Interacts with GRM2 and DRD2; this may affect signaling. In terms of tissue distribution, ubiquitous.

It localises to the cell membrane. The protein localises to the cell projection. It is found in the dendrite. The protein resides in the axon. Its subcellular location is the cytoplasmic vesicle. It localises to the membrane. The protein localises to the caveola. It is found in the presynapse. G-protein coupled receptor activity is regulated by lipids: oleamide increases HTR2A-mediated activity. Functionally, G-protein coupled receptor for 5-hydroxytryptamine (serotonin). Also functions as a receptor for various drugs and psychoactive substances, including mescaline, psilocybin, 1-(2,5-dimethoxy-4-iodophenyl)-2-aminopropane (DOI) and lysergic acid diethylamide (LSD). Ligand binding causes a conformation change that triggers signaling via guanine nucleotide-binding proteins (G proteins) and modulates the activity of downstream effectors. HTR2A is coupled to G(q)/G(11) G alpha proteins and activates phospholipase C-beta, releasing diacylglycerol (DAG) and inositol 1,4,5-trisphosphate (IP3) second messengers that modulate the activity of phosphatidylinositol 3-kinase and promote the release of Ca(2+) ions from intracellular stores, respectively. Beta-arrestin family members inhibit signaling via G proteins and mediate activation of alternative signaling pathways. Affects neural activity, perception, cognition and mood. Plays a role in the regulation of behavior, including responses to anxiogenic situations and psychoactive substances. Plays a role in intestinal smooth muscle contraction, and may play a role in arterial vasoconstriction. The polypeptide is 5-hydroxytryptamine receptor 2A (HTR2A) (Canis lupus familiaris (Dog)).